We begin with the raw amino-acid sequence, 238 residues long: Small ribosomal subunit protein uS2 (238 aa).

The protein belongs to the universal ribosomal protein uS2 family.

The polypeptide is Small ribosomal subunit protein uS2 (Chloroflexus aggregans (strain MD-66 / DSM 9485)).